A 287-amino-acid polypeptide reads, in one-letter code: ATP synthase gamma chain (287 aa).

This sequence belongs to the ATPase gamma chain family. As to quaternary structure, F-type ATPases have 2 components, CF(1) - the catalytic core - and CF(0) - the membrane proton channel. CF(1) has five subunits: alpha(3), beta(3), gamma(1), delta(1), epsilon(1). CF(0) has three main subunits: a, b and c.

It localises to the cell inner membrane. In terms of biological role, produces ATP from ADP in the presence of a proton gradient across the membrane. The gamma chain is believed to be important in regulating ATPase activity and the flow of protons through the CF(0) complex. The polypeptide is ATP synthase gamma chain (Serratia proteamaculans (strain 568)).